A 680-amino-acid chain; its full sequence is UvrABC system protein B (680 aa).

Positions 27 to 422 constitute a Helicase ATP-binding domain; that stretch reads AGALGGVTFQ…GRMAGEHVAE (396 aa). 40–47 provides a ligand contact to ATP; it reads GATGTGKT. The Beta-hairpin motif lies at 93 to 116; sequence YYDYYQPEAYIPQTDTYIEKSASI. The Helicase C-terminal domain occupies 443–609; it reads QVDDLLHEIH…PIVKRLDANS (167 aa). Residues 641 to 676 form the UVR domain; it reads PELVSQLEIQMRDAAKKLEFEKAAEYRDKIHKLRER.

It belongs to the UvrB family. In terms of assembly, forms a heterotetramer with UvrA during the search for lesions. Interacts with UvrC in an incision complex.

It localises to the cytoplasm. In terms of biological role, the UvrABC repair system catalyzes the recognition and processing of DNA lesions. A damage recognition complex composed of 2 UvrA and 2 UvrB subunits scans DNA for abnormalities. Upon binding of the UvrA(2)B(2) complex to a putative damaged site, the DNA wraps around one UvrB monomer. DNA wrap is dependent on ATP binding by UvrB and probably causes local melting of the DNA helix, facilitating insertion of UvrB beta-hairpin between the DNA strands. Then UvrB probes one DNA strand for the presence of a lesion. If a lesion is found the UvrA subunits dissociate and the UvrB-DNA preincision complex is formed. This complex is subsequently bound by UvrC and the second UvrB is released. If no lesion is found, the DNA wraps around the other UvrB subunit that will check the other stand for damage. The protein is UvrABC system protein B of Gloeobacter violaceus (strain ATCC 29082 / PCC 7421).